The primary structure comprises 501 residues: ATP synthase subunit alpha (501 aa).

An ATP-binding site is contributed by 169–176 (GDRQTGKT).

The protein belongs to the ATPase alpha/beta chains family. In terms of assembly, F-type ATPases have 2 components, CF(1) - the catalytic core - and CF(0) - the membrane proton channel. CF(1) has five subunits: alpha(3), beta(3), gamma(1), delta(1), epsilon(1). CF(0) has three main subunits: a(1), b(2) and c(9-12). The alpha and beta chains form an alternating ring which encloses part of the gamma chain. CF(1) is attached to CF(0) by a central stalk formed by the gamma and epsilon chains, while a peripheral stalk is formed by the delta and b chains.

Its subcellular location is the cell inner membrane. The catalysed reaction is ATP + H2O + 4 H(+)(in) = ADP + phosphate + 5 H(+)(out). Its function is as follows. Produces ATP from ADP in the presence of a proton gradient across the membrane. The alpha chain is a regulatory subunit. This Campylobacter lari (strain RM2100 / D67 / ATCC BAA-1060) protein is ATP synthase subunit alpha.